The sequence spans 366 residues: tRNA N6-adenosine threonylcarbamoyltransferase (366 aa).

Fe cation is bound by residues H119 and H123. Substrate-binding positions include 142–146, D175, G188, D192, and N281; that span reads LVSGG. D309 contacts Fe cation.

It belongs to the KAE1 / TsaD family. The cofactor is Fe(2+).

The protein resides in the cytoplasm. The catalysed reaction is L-threonylcarbamoyladenylate + adenosine(37) in tRNA = N(6)-L-threonylcarbamoyladenosine(37) in tRNA + AMP + H(+). Its function is as follows. Required for the formation of a threonylcarbamoyl group on adenosine at position 37 (t(6)A37) in tRNAs that read codons beginning with adenine. Is involved in the transfer of the threonylcarbamoyl moiety of threonylcarbamoyl-AMP (TC-AMP) to the N6 group of A37, together with TsaE and TsaB. TsaD likely plays a direct catalytic role in this reaction. The protein is tRNA N6-adenosine threonylcarbamoyltransferase of Synechococcus sp. (strain JA-3-3Ab) (Cyanobacteria bacterium Yellowstone A-Prime).